We begin with the raw amino-acid sequence, 249 residues long: Transmembrane protein 150C (249 aa).

Residues 1–9 (MDGKKCSVW) are Cytoplasmic-facing. Residues 10-30 (MFLPLVFTVFTSAGLWIVYFI) form a helical membrane-spanning segment. Residues 31–64 (AVEDDKIFPLNSAERKPGVKHAPYISIAGDEPPA) lie on the Extracellular side of the membrane. Residues 65–85 (SCVFSQVMNMAAFLALVVAVL) traverse the membrane as a helical segment. At 86-97 (RFIQLKPKVLNP) the chain is on the cytoplasmic side. The chain crosses the membrane as a helical span at residues 98 to 118 (WLNISGLVALCLASFGMTLLG). Residues 119 to 130 (NFQLTNDEEIHN) are Extracellular-facing. A helical membrane pass occupies residues 131-151 (VGTSLTFGFGTLTCWIQAALT). Residues 152–168 (LKVNIKNEGRKVGIPRV) lie on the Cytoplasmic side of the membrane. A helical transmembrane segment spans residues 169–189 (ILSASITLCVVLYFILMAQGI). Topologically, residues 190-192 (HMY) are extracellular. Residues 193-213 (AARVQWGLVMCFLSYFGTFAV) form a helical membrane-spanning segment. Topologically, residues 214–249 (EFRHYRYEIVCSEYQENFLSFSESLSEASEYQTDQV) are cytoplasmic.

Belongs to the DRAM/TMEM150 family.

It is found in the cell membrane. The protein resides in the lysosome membrane. It catalyses the reaction Ca(2+)(in) = Ca(2+)(out). The catalysed reaction is Na(+)(in) = Na(+)(out). The enzyme catalyses K(+)(in) = K(+)(out). It carries out the reaction Mg(2+)(in) = Mg(2+)(out). In terms of biological role, nonselective cationic channel with high permeability to Ca(2+). Component of a mechanosensitive cation channel. Confers mechanically activated (MA) currents with slow inactivation kinetics. May contribute to proprioception. This Bos taurus (Bovine) protein is Transmembrane protein 150C (TMEM150C).